We begin with the raw amino-acid sequence, 184 residues long: Peptide deformylase (184 aa).

The Fe cation site is built by C92 and H134. The active site involves E135. A Fe cation-binding site is contributed by H138.

Belongs to the polypeptide deformylase family. Requires Fe(2+) as cofactor.

The catalysed reaction is N-terminal N-formyl-L-methionyl-[peptide] + H2O = N-terminal L-methionyl-[peptide] + formate. Its function is as follows. Removes the formyl group from the N-terminal Met of newly synthesized proteins. Requires at least a dipeptide for an efficient rate of reaction. N-terminal L-methionine is a prerequisite for activity but the enzyme has broad specificity at other positions. The polypeptide is Peptide deformylase (Psychrobacter arcticus (strain DSM 17307 / VKM B-2377 / 273-4)).